The chain runs to 210 residues: Acetoin utilization protein AcuA (210 aa).

The N-acetyltransferase domain occupies 19 to 189; the sequence is VLIEGPISPE…ANCLMARIGK (171 aa).

The protein belongs to the acetyltransferase family. As to quaternary structure, monomer.

The protein operates within ketone degradation; acetoin degradation. In terms of biological role, part of the acuABC operon, which is possibly involved in the breakdown of acetoin and butanediol. Acts as an acetyltransferase inactivating acetyl-CoA synthetase AcsA via acetylation at a Lys residue. The protein is Acetoin utilization protein AcuA of Bacillus licheniformis (strain ATCC 14580 / DSM 13 / JCM 2505 / CCUG 7422 / NBRC 12200 / NCIMB 9375 / NCTC 10341 / NRRL NRS-1264 / Gibson 46).